The chain runs to 200 residues: Gamma-glutamyl-CDP-amidate hydrolase (200 aa).

One can recognise a Glutamine amidotransferase type-1 domain in the interval 20–200 (ECLALDWGKL…LKEWFSLIKE (181 aa)). Residue Cys-101 is the Nucleophile of the active site. Catalysis depends on residues His-178 and Glu-180.

It catalyses the reaction N(5)-(cytidine 5'-diphosphoramidyl)-L-glutamine + H2O = cytidine 5'-diphosphoramidate + L-glutamate + H(+). It functions in the pathway capsule biogenesis; capsule polysaccharide biosynthesis. In terms of biological role, involved in the biosynthesis of the O-methyl phosphoramidate (MeOPN) group found on the capsular polysaccharide (CPS) of C.jejuni. Catalyzes the hydrolysis of CDP-L-glutamine to L-glutamate and cytidine diphosphoramidate. The sequence is that of Gamma-glutamyl-CDP-amidate hydrolase from Campylobacter jejuni subsp. jejuni serotype O:2 (strain ATCC 700819 / NCTC 11168).